The chain runs to 178 residues: 6,7-dimethyl-8-ribityllumazine synthase (178 aa).

5-amino-6-(D-ribitylamino)uracil-binding positions include Tyr-27, 58–60, and 82–84; these read SLE and CVI. 87 to 88 lines the (2S)-2-hydroxy-3-oxobutyl phosphate pocket; it reads AT. Residue His-90 is the Proton donor of the active site. Asn-114 contacts 5-amino-6-(D-ribitylamino)uracil. Arg-128 contributes to the (2S)-2-hydroxy-3-oxobutyl phosphate binding site.

Belongs to the DMRL synthase family.

It catalyses the reaction (2S)-2-hydroxy-3-oxobutyl phosphate + 5-amino-6-(D-ribitylamino)uracil = 6,7-dimethyl-8-(1-D-ribityl)lumazine + phosphate + 2 H2O + H(+). It functions in the pathway cofactor biosynthesis; riboflavin biosynthesis; riboflavin from 2-hydroxy-3-oxobutyl phosphate and 5-amino-6-(D-ribitylamino)uracil: step 1/2. Functionally, catalyzes the formation of 6,7-dimethyl-8-ribityllumazine by condensation of 5-amino-6-(D-ribitylamino)uracil with 3,4-dihydroxy-2-butanone 4-phosphate. This is the penultimate step in the biosynthesis of riboflavin. The polypeptide is 6,7-dimethyl-8-ribityllumazine synthase (Jannaschia sp. (strain CCS1)).